We begin with the raw amino-acid sequence, 185 residues long: uncharacterized protein (185 aa).

The region spanning 9 to 169 (VILELAKESD…NGREDDKPLL (161 aa)) is the N-acetyltransferase domain.

This is an uncharacterized protein from Bacillus subtilis (strain 168).